Reading from the N-terminus, the 652-residue chain is Acetyl-coenzyme A synthetase (652 aa).

Residues 191-194 (RAGR), Thr311, and Asn335 each bind CoA. ATP contacts are provided by residues 387–389 (GEP), 411–416 (DTWWQT), Asp500, and Arg515. Position 523 (Ser523) interacts with CoA. Arg526 contacts ATP. Mg(2+) contacts are provided by Val537, His539, and Ile542. Arg584 is a binding site for CoA. Residue Lys609 is modified to N6-acetyllysine.

This sequence belongs to the ATP-dependent AMP-binding enzyme family. Mg(2+) serves as cofactor. Acetylated. Deacetylation by the SIR2-homolog deacetylase activates the enzyme.

The enzyme catalyses acetate + ATP + CoA = acetyl-CoA + AMP + diphosphate. Functionally, catalyzes the conversion of acetate into acetyl-CoA (AcCoA), an essential intermediate at the junction of anabolic and catabolic pathways. Acs undergoes a two-step reaction. In the first half reaction, Acs combines acetate with ATP to form acetyl-adenylate (AcAMP) intermediate. In the second half reaction, it can then transfer the acetyl group from AcAMP to the sulfhydryl group of CoA, forming the product AcCoA. Enables the cell to use acetate during aerobic growth to generate energy via the TCA cycle, and biosynthetic compounds via the glyoxylate shunt. Acetylates CheY, the response regulator involved in flagellar movement and chemotaxis. In Yersinia pseudotuberculosis serotype I (strain IP32953), this protein is Acetyl-coenzyme A synthetase.